The sequence spans 329 residues: Sideroflexin (329 aa).

5 helical membrane-spanning segments follow: residues 95–115 (AFLP…ASIG), 147–167 (ILEA…GLGW), 183–203 (LRMM…VLIM), 238–258 (FSRA…MGLF), and 274–294 (LNLA…IALF).

The protein belongs to the sideroflexin family.

It localises to the mitochondrion membrane. Functionally, mitochondrial amino-acid transporter that mediates transport of serine into mitochondria. The sequence is that of Sideroflexin from Dictyostelium discoideum (Social amoeba).